The primary structure comprises 440 residues: Streptokinase C (440 aa).

Positions 1 to 26 are cleaved as a signal peptide; it reads MKNYLSFGMFALLFALTFGTVNSVQA.

This protein is not a protease, but it activates plasminogen by complexing with it. As a potential virulence factor, it is thought to prevent the formation of effective fibrin barriers around the site of infection, thereby contributing to the invasiveness of the cells. The protein is Streptokinase C (skc) of Streptococcus dysgalactiae subsp. equisimilis (Streptococcus equisimilis).